Here is an 87-residue protein sequence, read N- to C-terminus: MNYLILISFALLVITGVESARDAYIAKPHNCVYECFDAFSSYCNGVCTKNGAKSGYCQILGTYGNGCWCIALPDNVPIRIPGKCHRR.

The N-terminal stretch at 1–19 (MNYLILISFALLVITGVES) is a signal peptide. The LCN-type CS-alpha/beta domain occupies 21–85 (RDAYIAKPHN…VPIRIPGKCH (65 aa)). Intrachain disulfides connect Cys-31/Cys-84, Cys-35/Cys-57, Cys-43/Cys-67, and Cys-47/Cys-69. The propeptide at 86–87 (RR) is removed by a carboxypeptidase.

This sequence belongs to the long (4 C-C) scorpion toxin superfamily. Sodium channel inhibitor family. Alpha subfamily. Expressed by the venom gland.

The protein localises to the secreted. Alpha toxins bind voltage-independently at site-3 of sodium channels (Nav) and inhibit the inactivation of the activated channels, thereby blocking neuronal transmission. This toxin inhibits inactivation of Nav1.6/SCN8A (EC(50)=790 nM) and drosophila DmNav1 (EC(50)=280 nM). The toxin (1 uM) does not significantly shift the midpoint of activation at the two channels, but induces a significant depolarizing shift in the V(1/2) of inactivation of the channels. Has antimicrobial activity. This is Sodium channel neurotoxin MeuNaTxalpha-5* from Mesobuthus eupeus (Lesser Asian scorpion).